The sequence spans 168 residues: Phosphopantetheine adenylyltransferase (168 aa).

S9 is a binding site for substrate. ATP contacts are provided by residues 9 to 10 (SF) and H17. The substrate site is built by K41, L73, and R87. ATP-binding positions include 88–90 (GLR), E98, and 123–129 (YAFLSSS).

Belongs to the bacterial CoaD family. As to quaternary structure, homohexamer. The cofactor is Mg(2+).

It localises to the cytoplasm. The enzyme catalyses (R)-4'-phosphopantetheine + ATP + H(+) = 3'-dephospho-CoA + diphosphate. It participates in cofactor biosynthesis; coenzyme A biosynthesis; CoA from (R)-pantothenate: step 4/5. Functionally, reversibly transfers an adenylyl group from ATP to 4'-phosphopantetheine, yielding dephospho-CoA (dPCoA) and pyrophosphate. This Heliobacterium modesticaldum (strain ATCC 51547 / Ice1) protein is Phosphopantetheine adenylyltransferase.